Here is a 604-residue protein sequence, read N- to C-terminus: Ectonucleoside triphosphate diphosphohydrolase 7 (604 aa).

Over 1–28 (MARISFSYLCPASWYFTVPTVSPFLRQR) the chain is Cytoplasmic. Residues 29–49 (VAFLGLFFISCLLLLMLIIDF) form a helical membrane-spanning segment. The Vesicular segment spans residues 50–546 (RHWSASLPRD…QAHGSWFRLS (497 aa)). Residue E217 is the Proton acceptor of the active site. N330 is a glycosylation site (N-linked (GlcNAc...) asparagine). C448 and C477 are oxidised to a cystine. Residues 547-567 (FVYNHYLFFACILVVLLAIFL) form a helical membrane-spanning segment. Topologically, residues 568–604 (YLLRLRRIHHRQTRASAPLDLLWLEEVVPMMGVQVGP) are cytoplasmic.

This sequence belongs to the GDA1/CD39 NTPase family. Ca(2+) serves as cofactor. The cofactor is Mg(2+).

The protein localises to the cytoplasmic vesicle membrane. The enzyme catalyses a ribonucleoside 5'-triphosphate + H2O = a ribonucleoside 5'-diphosphate + phosphate + H(+). It catalyses the reaction UTP + H2O = UDP + phosphate + H(+). It carries out the reaction GTP + H2O = GDP + phosphate + H(+). The catalysed reaction is CTP + H2O = CDP + phosphate + H(+). Functionally, catalyzes the hydrolysis of nucleoside triphosphates and diphosphates in a calcium- or magnesium-dependent manner. Preferentially hydrolyzes nucleoside 5'-triphosphates, with substrate preference for UTP &gt; GTP &gt; CTP. Hydrolyzes ATP and nucleoside diphosphates only to a minor extent. This Homo sapiens (Human) protein is Ectonucleoside triphosphate diphosphohydrolase 7 (ENTPD7).